Here is a 307-residue protein sequence, read N- to C-terminus: Thioredoxin-related transmembrane protein 2-B (307 aa).

The signal sequence occupies residues 1–19 (MALLTPLFAFLYHLPQVYK). At 20–111 (WLLKPYYIAS…VILFFRLDIR (92 aa)) the chain is on the extracellular side. A helical transmembrane segment spans residues 112 to 132 (LGLLYLTLCIVFLMTCKPPLY). The Thioredoxin domain maps to 132 to 269 (YMGPEYIKYF…LYQKSKKLGK (138 aa)). Residues 133–307 (MGPEYIKYFS…AMDTESKKDK (175 aa)) lie on the Cytoplasmic side of the membrane. The disordered stretch occupies residues 268–307 (GKTKEKLERPSELVFSTVPEEEEPEAETISAMDTESKKDK). A compositionally biased stretch (basic and acidic residues) spans 269-278 (KTKEKLERPS). The short motif at 304–307 (KKDK) is the Di-lysine motif element.

Monomer. Homodimer; disulfide-linked. Occurs in both reduced and oxidized monomeric form. Oxidative conditions increase homodimerization.

It localises to the endoplasmic reticulum membrane. Its subcellular location is the mitochondrion membrane. In terms of biological role, endoplasmic reticulum and mitochondria-associated protein that probably functions as a regulator of cellular redox state and thereby regulates protein post-translational modification, protein folding and mitochondrial activity. This Danio rerio (Zebrafish) protein is Thioredoxin-related transmembrane protein 2-B (tmx2b).